The sequence spans 388 residues: Diacylglycerol O-acyltransferase 2 (388 aa).

At 1-69 (MKTLIAAYSG…NRSKVEKHLQ (69 aa)) the chain is on the cytoplasmic side. The helical transmembrane segment at 70-88 (VISVLQWVLSFLVLGVACS) threads the bilayer. The Lumenal portion of the chain corresponds to 89–92 (VILM). A helical membrane pass occupies residues 93 to 112 (YTFCTDCWLIAALYFTWLAF). The Cytoplasmic segment spans residues 113–388 (DWNTPKKGGR…LPETEVLEVN (276 aa)).

Belongs to the diacylglycerol acyltransferase family. As to quaternary structure, forms multimeric complexes consisting of several DGAT2 subunits. Interacts with SLC27A1 and this interaction is enhanced in the presence of ZFYVE1.

It is found in the endoplasmic reticulum membrane. It localises to the lipid droplet. Its subcellular location is the cytoplasm. The protein resides in the perinuclear region. The enzyme catalyses an acyl-CoA + a 1,2-diacyl-sn-glycerol = a triacyl-sn-glycerol + CoA. It catalyses the reaction all-trans-retinol + an acyl-CoA = an all-trans-retinyl ester + CoA. The catalysed reaction is 2-(9Z-octadecenoyl)-glycerol + (9Z)-octadecenoyl-CoA = 1,2-di-(9Z-octadecenoyl)-sn-glycerol + CoA. It carries out the reaction 1,2-di-(9Z-octadecenoyl)-sn-glycerol + (9Z)-octadecenoyl-CoA = 1,2,3-tri-(9Z-octadecenoyl)-glycerol + CoA. The enzyme catalyses all-trans-retinol + hexadecanoyl-CoA = all-trans-retinyl hexadecanoate + CoA. It catalyses the reaction 1-O-(9Z-octadecenyl)-glycerol + (9Z)-octadecenoyl-CoA = 1-O-(9Z-octadecyl)-3-(9Z-octadecenoyl)-glycerol + CoA. The catalysed reaction is 1-(9Z-octadecenoyl)-glycerol + (9Z)-octadecenoyl-CoA = 1,2-di-(9Z-octadecenoyl)-glycerol + CoA. It carries out the reaction 1,2-di-(9Z-octadecenoyl)-sn-glycerol + hexadecanoyl-CoA = 1,2-di-(9Z)-octadecenoyl-3-hexadecanoyl-sn-glycerol + CoA. The enzyme catalyses 1,3-di-(9Z-octadecenoyl)-glycerol + (9Z)-octadecenoyl-CoA = 1,2,3-tri-(9Z-octadecenoyl)-glycerol + CoA. It catalyses the reaction 2,3-di-(9Z)-octadecenoyl-sn-glycerol + (9Z)-octadecenoyl-CoA = 1,2,3-tri-(9Z-octadecenoyl)-glycerol + CoA. The catalysed reaction is 2-(9Z-octadecenoyl)-glycerol + hexadecanoyl-CoA = 1-hexadecanoyl-2-(9Z-octadecenoyl)-sn-glycerol + CoA. It participates in glycerolipid metabolism; triacylglycerol biosynthesis. Inhibited by niacin. Functionally, essential acyltransferase that catalyzes the terminal and only committed step in triacylglycerol synthesis by using diacylglycerol and fatty acyl CoA as substrates. Required for synthesis and storage of intracellular triglycerides. Probably plays a central role in cytosolic lipid accumulation. In liver, is primarily responsible for incorporating endogenously synthesized fatty acids into triglycerides. Also functions as an acyl-CoA retinol acyltransferase (ARAT). Also able to use 1-monoalkylglycerol (1-MAkG) as an acyl acceptor for the synthesis of monoalkyl-monoacylglycerol (MAMAG). The polypeptide is Diacylglycerol O-acyltransferase 2 (Rattus norvegicus (Rat)).